The following is a 397-amino-acid chain: Serpin B10 (397 aa).

Positions 74 to 77 match the Nuclear localization signal motif; the sequence is KKRK.

It belongs to the serpin family. Ov-serpin subfamily.

Its subcellular location is the nucleus. It localises to the cytoplasm. In terms of biological role, protease inhibitor that may play a role in the regulation of protease activities during hematopoiesis and apoptosis induced by TNF. May regulate protease activities in the cytoplasm and in the nucleus. The sequence is that of Serpin B10 (SERPINB10) from Plecturocebus moloch (Dusky titi monkey).